Here is a 366-residue protein sequence, read N- to C-terminus: GDSL esterase/lipase At1g74460 (366 aa).

Positions 1–20 (MKFCAIFVLFIVLAINGYDC) are cleaved as a signal peptide. Catalysis depends on Ser30, which acts as the Nucleophile. Residues Asn113 and Asn260 are each glycosylated (N-linked (GlcNAc...) asparagine). Active-site residues include Asp320 and His323.

The protein belongs to the 'GDSL' lipolytic enzyme family.

It localises to the secreted. This is GDSL esterase/lipase At1g74460 from Arabidopsis thaliana (Mouse-ear cress).